Reading from the N-terminus, the 705-residue chain is Bifunctional arginine dihydrolase/ornithine cyclodeaminase ArgZ (705 aa).

The tract at residues 10–269 is arginine dihydrolase; sequence CPPDHYDVDY…GAAKCLTLRV (260 aa). The L-arginine site is built by N22, N71, R90, R139, H168, D170, A258, and C264. Residues N22, N71, R90, R139, and H168 each contribute to the L-ornithine site. H168 serves as the catalytic Proton donor/acceptor. 2 residues coordinate L-ornithine: A258 and C264. C264 (nucleophile) is an active-site residue. Positions 285–695 are ornithine cyclodeaminase; it reads SRVIRMEGHL…SLLVRQLQQL (411 aa). Positions 525, 526, 604, 636, 637, 638, 639, 657, 680, and 681 each coordinate NAD(+).

In the N-terminal section; belongs to the DDAH family. The protein in the C-terminal section; belongs to the AgrE/ArgZ ornithine cyclodeaminase family. In terms of assembly, homotetramer. The cofactor is NAD(+).

It catalyses the reaction L-arginine + 2 H2O + 2 H(+) = L-ornithine + 2 NH4(+) + CO2. The catalysed reaction is L-ornithine = L-proline + NH4(+). With respect to regulation, arginine dihydrolase activity does not require a metal cofactor. Functionally, bifunctional enzyme involved in a cyanobacterial arginine utilization pathway that enables cellular adaptation to nitrogen fluctuations. Catalyzes the hydrolysis of arginine to ornithine, with the release of ammonia and carbon dioxide. Then, probably catalyzes the conversion of ornithine to proline, with the release of ammonia. Is highly specific for arginine and cannot hydrolyze citrulline, dimethylarginine and other amino acids. This Synechocystis sp. (strain ATCC 27184 / PCC 6803 / Kazusa) protein is Bifunctional arginine dihydrolase/ornithine cyclodeaminase ArgZ.